The chain runs to 570 residues: Sulfite reductase [NADPH] hemoprotein beta-component (570 aa).

The [4Fe-4S] cluster site is built by C434, C440, C479, and C483. C483 lines the siroheme pocket.

Belongs to the nitrite and sulfite reductase 4Fe-4S domain family. In terms of assembly, alpha(8)-beta(8). The alpha component is a flavoprotein, the beta component is a hemoprotein. Siroheme serves as cofactor. It depends on [4Fe-4S] cluster as a cofactor.

It carries out the reaction hydrogen sulfide + 3 NADP(+) + 3 H2O = sulfite + 3 NADPH + 4 H(+). It participates in sulfur metabolism; hydrogen sulfide biosynthesis; hydrogen sulfide from sulfite (NADPH route): step 1/1. In terms of biological role, component of the sulfite reductase complex that catalyzes the 6-electron reduction of sulfite to sulfide. This is one of several activities required for the biosynthesis of L-cysteine from sulfate. The chain is Sulfite reductase [NADPH] hemoprotein beta-component from Salmonella dublin (strain CT_02021853).